The primary structure comprises 1043 residues: Ack-related non-receptor tyrosine kinase (1043 aa).

One can recognise a Protein kinase domain in the interval 113–379 (ITLCKELGQG…SDIVAKFPER (267 aa)). Residues 119-127 (LGQGEFGSV) and K146 each bind ATP. Catalysis depends on D241, which acts as the Proton acceptor. The region spanning 379-444 (RRAQSVRAVV…RPTDTVAHLG (66 aa)) is the SH3 domain. Residues 443 to 481 (LGSEPPCSNGTIENGFSEKEKGGKKNKKAEKESERERKK) form a disordered region. A compositionally biased stretch (basic and acidic residues) spans 458-481 (FSEKEKGGKKNKKAEKESERERKK). The CRIB domain maps to 484-498 (ISEPVGDVRHTCHVG). 4 disordered regions span residues 514–644 (MCPT…SAAN), 790–842 (KINE…GWSS), 859–898 (KQAS…LSVR), and 932–993 (LIDG…RQFP). A compositionally biased stretch (low complexity) spans 516 to 543 (PTSSSPSTSRGSQASPAPSHTSSSTTSS). The segment covering 610-624 (GNQHSVQVHDQFSSL) has biased composition (polar residues). Residues 630-644 (SLTPTAPPLTASAAN) are compositionally biased toward low complexity. A coiled-coil region spans residues 785–812 (EQEVRKINEKSAREHRKTEDLLREERQK). The segment covering 790–818 (KINEKSAREHRKTEDLLREERQKEQKPGE) has biased composition (basic and acidic residues). Residues 825–842 (PAESLYSTRTPQQEGWSS) show a composition bias toward polar residues. Residues 870–884 (PTSSRLSTLDRSSIS) show a composition bias toward low complexity.

It belongs to the protein kinase superfamily. Tyr protein kinase family. It depends on Mg(2+) as a cofactor.

The enzyme catalyses L-tyrosyl-[protein] + ATP = O-phospho-L-tyrosyl-[protein] + ADP + H(+). It carries out the reaction L-seryl-[protein] + ATP = O-phospho-L-seryl-[protein] + ADP + H(+). The catalysed reaction is L-threonyl-[protein] + ATP = O-phospho-L-threonyl-[protein] + ADP + H(+). In terms of biological role, probable tyrosine protein kinase which plays a role in vulva development, probably by acting as a negative regulator of the let-23/EGFR and let-60/ras pathway. Involved in the negative regulation of germline development. The polypeptide is Ack-related non-receptor tyrosine kinase (Caenorhabditis elegans).